The primary structure comprises 225 residues: MIHYLHFIGEFCFSSAVKVVEWFSENLFLKRSTMALSKRGFVMTSNARFHGEEEELELGLGSVRFTRGLGRKRILISSCVRESLSRSAVEIPVVSESPPVKSSLKRQRSRITIVSSSSSEKSRLECLPQDLLIRVICGVDHEDLKSLKLVSKSIREASLVAKTLHFAYTTPKKTRAFRNSIDLEEVSDSRHQEDDIEPPNAPRHYRWTKAKRKEQLSSVSAALFT.

In terms of domain architecture, F-box spans 121-169 (KSRLECLPQDLLIRVICGVDHEDLKSLKLVSKSIREASLVAKTLHFAYT).

As to quaternary structure, part of a SCF (ASK-cullin-F-box) protein ligase complex. Interacts with SKP1A/ASK1 and SPK1B/ASK2.

Its subcellular location is the nucleus. The protein operates within protein modification; protein ubiquitination. In terms of biological role, component of SCF(ASK-cullin-F-box) E3 ubiquitin ligase complexes, which may mediate the ubiquitination and subsequent proteasomal degradation of target proteins. In Arabidopsis thaliana (Mouse-ear cress), this protein is F-box protein SKIP27 (SKIP27).